The chain runs to 352 residues: Biotin synthase (352 aa).

The 219-residue stretch at 44–262 folds into the Radical SAM core domain; that stretch reads NRVQVSTLLS…LAVARLLMPK (219 aa). 3 residues coordinate [4Fe-4S] cluster: Cys-59, Cys-63, and Cys-66. [2Fe-2S] cluster is bound by residues Cys-103, Cys-134, Cys-194, and Arg-266.

Belongs to the radical SAM superfamily. Biotin synthase family. In terms of assembly, homodimer. [4Fe-4S] cluster is required as a cofactor. [2Fe-2S] cluster serves as cofactor.

The catalysed reaction is (4R,5S)-dethiobiotin + (sulfur carrier)-SH + 2 reduced [2Fe-2S]-[ferredoxin] + 2 S-adenosyl-L-methionine = (sulfur carrier)-H + biotin + 2 5'-deoxyadenosine + 2 L-methionine + 2 oxidized [2Fe-2S]-[ferredoxin]. It functions in the pathway cofactor biosynthesis; biotin biosynthesis; biotin from 7,8-diaminononanoate: step 2/2. Functionally, catalyzes the conversion of dethiobiotin (DTB) to biotin by the insertion of a sulfur atom into dethiobiotin via a radical-based mechanism. The polypeptide is Biotin synthase (Pseudomonas putida (strain W619)).